Reading from the N-terminus, the 160-residue chain is Sec-independent protein translocase protein TatB (160 aa).

Residues 1-21 (MFGMGFFEILVVLVVAIIFLG) form a helical membrane-spanning segment. Residues 118 to 160 (HLNEEVSNEEALNKEVSSDESPKEVQLATDNNTKEHDKEKEHV) form a disordered region. Basic and acidic residues-rich tracts occupy residues 128–140 (ALNK…ESPK) and 149–160 (NTKEHDKEKEHV).

This sequence belongs to the TatB family. The Tat system comprises two distinct complexes: a TatABC complex, containing multiple copies of TatA, TatB and TatC subunits, and a separate TatA complex, containing only TatA subunits. Substrates initially bind to the TatABC complex, which probably triggers association of the separate TatA complex to form the active translocon.

The protein resides in the cell inner membrane. Part of the twin-arginine translocation (Tat) system that transports large folded proteins containing a characteristic twin-arginine motif in their signal peptide across membranes. Together with TatC, TatB is part of a receptor directly interacting with Tat signal peptides. TatB may form an oligomeric binding site that transiently accommodates folded Tat precursor proteins before their translocation. The chain is Sec-independent protein translocase protein TatB from Helicobacter pylori (strain HPAG1).